A 436-amino-acid polypeptide reads, in one-letter code: GTPase Der (436 aa).

2 consecutive EngA-type G domains span residues P4–E167 and I175–N351. Residues G10–S17, D57–I61, N119–D122, G181–S188, D229–M233, and N294–D297 each bind GTP. In terms of domain architecture, KH-like spans T352–K436.

The protein belongs to the TRAFAC class TrmE-Era-EngA-EngB-Septin-like GTPase superfamily. EngA (Der) GTPase family. As to quaternary structure, associates with the 50S ribosomal subunit.

Its function is as follows. GTPase that plays an essential role in the late steps of ribosome biogenesis. This chain is GTPase Der, found in Streptococcus gordonii (strain Challis / ATCC 35105 / BCRC 15272 / CH1 / DL1 / V288).